We begin with the raw amino-acid sequence, 203 residues long: Snake venom metalloproteinase adamalysin-2 (203 aa).

Residues R7 to P203 enclose the Peptidase M12B domain. Ca(2+)-binding residues include E10 and D94. 2 cysteine pairs are disulfide-bonded: C118–C198 and C158–C165. H143 is a Zn(2+) binding site. The active site involves E144. Zn(2+) contacts are provided by H147 and H153. Ca(2+) contacts are provided by C198 and N201.

It belongs to the venom metalloproteinase (M12B) family. P-I subfamily. As to quaternary structure, monomer. It depends on Zn(2+) as a cofactor. Expressed by the venom gland.

The protein resides in the secreted. It carries out the reaction Cleavage of 1-Phe-|-Val-2, 5-His-|-Leu-6, 14-Ala-|-Leu-15, 15-Leu-|-Tyr-16, and 16-Tyr-|-Leu-17 of insulin B chain.. Has no significant hemorrhagic activity, but inactivates serpins by limited proteolysis of their reactive-site loops. This Crotalus adamanteus (Eastern diamondback rattlesnake) protein is Snake venom metalloproteinase adamalysin-2.